A 205-amino-acid chain; its full sequence is Urease accessory protein UreG 1 (205 aa).

Residue 14-21 (GPVGSGKT) coordinates GTP.

This sequence belongs to the SIMIBI class G3E GTPase family. UreG subfamily. Homodimer. UreD, UreF and UreG form a complex that acts as a GTP-hydrolysis-dependent molecular chaperone, activating the urease apoprotein by helping to assemble the nickel containing metallocenter of UreC. The UreE protein probably delivers the nickel.

The protein resides in the cytoplasm. Facilitates the functional incorporation of the urease nickel metallocenter. This process requires GTP hydrolysis, probably effectuated by UreG. This is Urease accessory protein UreG 1 from Methylobacterium radiotolerans (strain ATCC 27329 / DSM 1819 / JCM 2831 / NBRC 15690 / NCIMB 10815 / 0-1).